The following is a 1000-amino-acid chain: C2 domain-containing protein 5 (1000 aa).

Residues 1-109 (MPGKLKVKIV…EAATVISGWF (109 aa)) form the C2 domain. Residues Asp-19, Asp-26, Asp-76, Asp-78, Ser-81, and Asp-84 each contribute to the Ca(2+) site. Phosphoserine; by PKB/AKT2 is present on Ser-197. Phosphoserine occurs at positions 200 and 260. A disordered region spans residues 265 to 330 (MKEIPFNEDP…SGSAGKEGGP (66 aa)). Over residues 274–289 (PNPNTHSSGPSTPLKN) the composition is skewed to polar residues. Over residues 290-318 (QTYSFSPSKSYSRQSSSSDTDLSLTPKTG) the composition is skewed to low complexity. A phosphoserine mark is found at Ser-293, Ser-295, Ser-304, Ser-305, and Ser-306. Thr-317 is modified (phosphothreonine). Gly residues predominate over residues 319–328 (MGSGSAGKEG). Ser-323 is subject to Phosphoserine. Residue Thr-601 is modified to Phosphothreonine. The disordered stretch occupies residues 639 to 669 (EIIGSPIPEPRQRSRLLRSQSESSDEVTELD). Ser-643, Ser-657, Ser-659, Ser-661, and Ser-662 each carry phosphoserine. Residue Thr-666 is modified to Phosphothreonine. The residue at position 671 (Ser-671) is a Phosphoserine. The residue at position 807 (Thr-807) is a Phosphothreonine. 2 positions are modified to phosphoserine: Ser-817 and Ser-852.

Ca(2+) serves as cofactor. Post-translationally, phosphorylated on Ser-197 by active myristoylated kinase AKT2; insulin-stimulated phosphorylation by AKT2 regulates SLC2A4/GLUT4 translocation into the plasma membrane.

It localises to the cytoplasmic vesicle membrane. The protein localises to the cytoplasm. Its subcellular location is the cell cortex. It is found in the cell membrane. The protein resides in the cell projection. It localises to the ruffle. Its function is as follows. Required for insulin-stimulated glucose transport and glucose transporter SLC2A4/GLUT4 translocation from intracellular glucose storage vesicle (GSV) to the plasma membrane (PM) in adipocytes. Binds phospholipid membranes in a calcium-dependent manner and is necessary for the optimal membrane fusion between SLC2A4/GLUT4 GSV and the PM. This is C2 domain-containing protein 5 (C2CD5) from Homo sapiens (Human).